The primary structure comprises 334 residues: Ornithine carbamoyltransferase subunit I (334 aa).

Carbamoyl phosphate contacts are provided by residues 56–59 (STRT), Q83, R107, and 134–137 (HPTQ). L-ornithine contacts are provided by residues N168, D232, and 236–237 (SM). Residue C274 coordinates Zn(2+). Residues 274–275 (CL) and R320 each bind carbamoyl phosphate.

This sequence belongs to the aspartate/ornithine carbamoyltransferase superfamily. OTCase family. In E.coli strain K12, trimer of identical or non-identical chains are composed of ArgI (I) and/or ArgF (F). The trimer has the following composition: FFI, FFF, FII, III. E.coli strains B and W, which are known to contain only ArgI, produce only a trimer of identical chains (III).

The protein resides in the cytoplasm. It catalyses the reaction carbamoyl phosphate + L-ornithine = L-citrulline + phosphate + H(+). Its pathway is amino-acid biosynthesis; L-arginine biosynthesis; L-arginine from L-ornithine and carbamoyl phosphate: step 1/3. With respect to regulation, reversely inhibited by N-(N-Sulfodiaminophosphinyl)-L-ornithine. Zinc is an allosteric regulator of the substrate-bound enzyme and a competitive inhibitor of the free enzyme. In terms of biological role, reversibly catalyzes the transfer of the carbamoyl group from carbamoyl phosphate (CP) to the N(epsilon) atom of ornithine (ORN) to produce L-citrulline, which is a substrate for argininosuccinate synthetase, the enzyme involved in the final step in arginine biosynthesis. The chain is Ornithine carbamoyltransferase subunit I from Escherichia coli (strain K12).